Consider the following 513-residue polypeptide: Sterol 14-alpha demethylase rstn2 (513 aa).

A helical transmembrane segment spans residues W3–T23. C453 is a heme binding site.

It belongs to the cytochrome P450 family. The cofactor is heme.

The protein localises to the membrane. The enzyme catalyses a 14alpha-methyl steroid + 3 reduced [NADPH--hemoprotein reductase] + 3 O2 = a Delta(14) steroid + formate + 3 oxidized [NADPH--hemoprotein reductase] + 4 H2O + 4 H(+). It carries out the reaction a 14alpha-methyl steroid + reduced [NADPH--hemoprotein reductase] + O2 = a 14alpha-hydroxymethyl steroid + oxidized [NADPH--hemoprotein reductase] + H2O + H(+). The catalysed reaction is a 14alpha-hydroxymethyl steroid + reduced [NADPH--hemoprotein reductase] + O2 = a 14alpha-formyl steroid + oxidized [NADPH--hemoprotein reductase] + 2 H2O + H(+). It catalyses the reaction a 14alpha-formyl steroid + reduced [NADPH--hemoprotein reductase] + O2 = a Delta(14) steroid + formate + oxidized [NADPH--hemoprotein reductase] + H2O + 2 H(+). The enzyme catalyses lanosterol + 3 reduced [NADPH--hemoprotein reductase] + 3 O2 = 4,4-dimethyl-5alpha-cholesta-8,14,24-trien-3beta-ol + formate + 3 oxidized [NADPH--hemoprotein reductase] + 4 H2O + 4 H(+). It carries out the reaction lanosterol + reduced [NADPH--hemoprotein reductase] + O2 = 32-hydroxylanosterol + oxidized [NADPH--hemoprotein reductase] + H2O + H(+). The catalysed reaction is 32-hydroxylanosterol + reduced [NADPH--hemoprotein reductase] + O2 = 32-oxolanosterol + oxidized [NADPH--hemoprotein reductase] + 2 H2O + H(+). It catalyses the reaction 32-oxolanosterol + reduced [NADPH--hemoprotein reductase] + O2 = 4,4-dimethyl-5alpha-cholesta-8,14,24-trien-3beta-ol + formate + oxidized [NADPH--hemoprotein reductase] + H2O + 2 H(+). The enzyme catalyses eburicol + 3 reduced [NADPH--hemoprotein reductase] + 3 O2 = 14-demethyleburicol + formate + 3 oxidized [NADPH--hemoprotein reductase] + 4 H2O + 4 H(+). It carries out the reaction eburicol + reduced [NADPH--hemoprotein reductase] + O2 = 32-hydroxyeburicol + oxidized [NADPH--hemoprotein reductase] + H2O + H(+). The catalysed reaction is 32-hydroxyeburicol + reduced [NADPH--hemoprotein reductase] + O2 = 32-oxoeburicol + oxidized [NADPH--hemoprotein reductase] + 2 H2O + H(+). It catalyses the reaction 32-oxoeburicol + reduced [NADPH--hemoprotein reductase] + O2 = 14-demethyleburicol + formate + oxidized [NADPH--hemoprotein reductase] + H2O + 2 H(+). Its pathway is steroid biosynthesis; sterol biosynthesis. Functionally, sterol 14-alpha demethylase; part of the gene cluster that mediates the biosynthesis of the tetrahydropyranyl antifungal agent restricticin that acts as an inhibitor of CYP51 and blocks the ergosterol biosynthesis. Sterol 14-alpha-demethylase plays a critical role in the biosynthesis of ergosterol, the major sterol component in fungal membranes that participates in a variety of functions. Rtsn2 acts as a self-resistant CYP51 that contains mutations found in CYP51s isolated from azole resistance strains and that is not inhibited by the final product of the cluster, restricticin. In Aspergillus nomiae NRRL (strain ATCC 15546 / NRRL 13137 / CBS 260.88 / M93), this protein is Sterol 14-alpha demethylase rstn2.